Consider the following 131-residue polypeptide: Structural protein ORF131 (131 aa).

It belongs to the viral ORF131/RIP family.

The protein resides in the virion. The sequence is that of Structural protein ORF131 from Acidianus convivator (ATV).